The sequence spans 219 residues: uncharacterized protein (219 aa).

Residues 1–15 (MLKLTTTSVTFHVLR) lie on the Cytoplasmic side of the membrane. A helical transmembrane segment spans residues 16-36 (YFQLGLSVTNLLLASFAIITN). Over 37–41 (YKVDR) the chain is Vacuolar. The chain crosses the membrane as a helical span at residues 42–62 (ILRLSLAVSIISSVYFGIVRF). A topological domain (cytoplasmic) is located at residue L63. A helical transmembrane segment spans residues 64–84 (PVLLIFVMEIVQTVLWFTAFV). Residues 85-116 (TLASKFGSMSCSSMPRGINFDYSGSCKIAKID) are Vacuolar-facing. A helical membrane pass occupies residues 117-137 (ILPEAVLFILFLATTYASYIT). Residues 138–219 (VLSQAKENGS…VIDGSIEHSS (82 aa)) are Cytoplasmic-facing. Residues 176-219 (PLLDLEVQEDARTETESIEDSTDSEDNANIEQEKVIDGSIEHSS) form a disordered region. Positions 191 to 203 (ESIEDSTDSEDNA) are enriched in acidic residues. Residues 206–219 (EQEKVIDGSIEHSS) show a composition bias toward basic and acidic residues.

It is found in the vacuole membrane. This is an uncharacterized protein from Saccharomyces cerevisiae (strain ATCC 204508 / S288c) (Baker's yeast).